The chain runs to 257 residues: tRNA pseudouridine synthase A (257 aa).

The Nucleophile role is filled by aspartate 53. Position 111 (tyrosine 111) interacts with substrate.

This sequence belongs to the tRNA pseudouridine synthase TruA family. In terms of assembly, homodimer.

The enzyme catalyses uridine(38/39/40) in tRNA = pseudouridine(38/39/40) in tRNA. Its function is as follows. Formation of pseudouridine at positions 38, 39 and 40 in the anticodon stem and loop of transfer RNAs. The protein is tRNA pseudouridine synthase A of Xanthomonas campestris pv. campestris (strain 8004).